The following is a 204-amino-acid chain: Protein FAM167A (204 aa).

The interval 58-80 is disordered; the sequence is GLAVSDGSTELEKDAGLKPRATP. Positions 113–146 form a coiled coil; that stretch reads LRKELMEMRIQDQQLARQLMRLRGDINKLKVEQT.

Belongs to the FAM167 (SEC) family.

The chain is Protein FAM167A (fam167a) from Danio rerio (Zebrafish).